A 529-amino-acid chain; its full sequence is hal-like protein DDB_G0273787/DDB_G0273081 (529 aa).

Positions 151-153 (ASG) form a cross-link, 5-imidazolinone (Ala-Gly). Ser152 carries the post-translational modification 2,3-didehydroalanine (Ser).

This sequence belongs to the PAL/histidase family. Contains an active site 4-methylidene-imidazol-5-one (MIO), which is formed autocatalytically by cyclization and dehydration of residues Ala-Ser-Gly.

The protein localises to the cytoplasm. It carries out the reaction L-histidine = trans-urocanate + NH4(+). It participates in amino-acid degradation; L-histidine degradation into L-glutamate; N-formimidoyl-L-glutamate from L-histidine: step 1/3. The chain is hal-like protein DDB_G0273787/DDB_G0273081 from Dictyostelium discoideum (Social amoeba).